Reading from the N-terminus, the 459-residue chain is Putrescine aminotransferase (459 aa).

Pyridoxal 5'-phosphate is bound by residues 150–151 (GT) and glutamine 274. Lysine 300 is modified (N6-(pyridoxal phosphate)lysine). A pyridoxal 5'-phosphate-binding site is contributed by threonine 332.

Belongs to the class-III pyridoxal-phosphate-dependent aminotransferase family. Putrescine aminotransferase subfamily. Requires pyridoxal 5'-phosphate as cofactor.

It catalyses the reaction an alkane-alpha,omega-diamine + 2-oxoglutarate = an omega-aminoaldehyde + L-glutamate. It carries out the reaction putrescine + 2-oxoglutarate = 1-pyrroline + L-glutamate + H2O. The catalysed reaction is cadaverine + 2-oxoglutarate = 5-aminopentanal + L-glutamate. It functions in the pathway amine and polyamine degradation; putrescine degradation; 4-aminobutanal from putrescine (transaminase route): step 1/1. Catalyzes the aminotransferase reaction from putrescine to 2-oxoglutarate, leading to glutamate and 4-aminobutanal, which spontaneously cyclizes to form 1-pyrroline. This is the first step in one of two pathways for putrescine degradation, where putrescine is converted into 4-aminobutanoate (gamma-aminobutyrate or GABA) via 4-aminobutanal. Also functions as a cadaverine transaminase in a a L-lysine degradation pathway to succinate that proceeds via cadaverine, glutarate and L-2-hydroxyglutarate. The protein is Putrescine aminotransferase of Salmonella dublin (strain CT_02021853).